Here is an 834-residue protein sequence, read N- to C-terminus: MTRSPFRRLVFGTLRRLLYLWVRSETINQSSFTLNLDRSRPVFYVLQNPSLTDLAVVDTECTKAGLPRPVLPVSVGSLIEPAAFFYLTPDPDWLGRQDKRGAPPTLTRLVSALSQNAAEDAQIIPVSVFWGQSPDSENSPWKLLFADSWAVTGRLRRLLSIMILGRKTRVQFSAPIHLRELIEHNKGHERTVRMAQRILRVHFRNLKAAVIGPDISHRRNLVKGLLNQPLVKQAILDEAERENISPEKAKAQALRYGNEIASDYTYTAIRFLEVVLSWFWNKIYDGIKVNHIEGVQKVAQGHEVIYVPCHRSHIDYLLLSYLLFRNGLTPPHIAAGINLNMPVIGSLLRRGGAFFMRRTFKGNPLYTSVFNEYLHTLFTKGFPVEYFVEGGRSRTGRMLQPKTGMLAITLRSFLRSSRMPIVFVPVYIGYERVLEGRTYLGELRGASKKKESIFDIFKVIGALKQRFGQVAVNFGEPIKLAEFLDSEQPGWRQQELGPQFKPAWLNETTNRLGEKVAQHLNEAAAINPVNLVALALLSTTRLALDDRAMARVLDLYLALLRKVPYSPHTTLPEGDGRALIEHVKDMDLLSEQNDALGKILYLDEQNAVLMTYYRNNVLHIFALPALLASFFQSTSRMSREQILRYTRALYPYLQSELFIRWTLDELDAVIDQWLEAFVEQGLLRFEKDVYLRPAPSSRHFVLLTLLSKSIAQTLQRFYMTVSLLLNSGQNSISAEELEDLCTVMAQRLSILHGLNAPEFFDKSLFRHFIQTLLDLDVLRRDEAGKLSYHELLGELAEGAAKRVLPAEIRLSIRQVALHRSEDAADQVAPPVQND.

Positions 309–314 (CHRSHI) match the HXXXXD motif motif.

The protein belongs to the GPAT/DAPAT family.

Its subcellular location is the cell inner membrane. The catalysed reaction is sn-glycerol 3-phosphate + an acyl-CoA = a 1-acyl-sn-glycero-3-phosphate + CoA. It participates in phospholipid metabolism; CDP-diacylglycerol biosynthesis; CDP-diacylglycerol from sn-glycerol 3-phosphate: step 1/3. This Pseudomonas fluorescens (strain Pf0-1) protein is Glycerol-3-phosphate acyltransferase.